The following is a 341-amino-acid chain: tRNA N6-adenosine threonylcarbamoyltransferase (341 aa).

Residues His111 and His115 each coordinate Fe cation. Residues 134-138, Asp167, Gly180, and Asn276 contribute to the substrate site; that span reads LVSGG. Asp304 serves as a coordination point for Fe cation.

The protein belongs to the KAE1 / TsaD family. Fe(2+) is required as a cofactor.

The protein resides in the cytoplasm. It catalyses the reaction L-threonylcarbamoyladenylate + adenosine(37) in tRNA = N(6)-L-threonylcarbamoyladenosine(37) in tRNA + AMP + H(+). Required for the formation of a threonylcarbamoyl group on adenosine at position 37 (t(6)A37) in tRNAs that read codons beginning with adenine. Is involved in the transfer of the threonylcarbamoyl moiety of threonylcarbamoyl-AMP (TC-AMP) to the N6 group of A37, together with TsaE and TsaB. TsaD likely plays a direct catalytic role in this reaction. The sequence is that of tRNA N6-adenosine threonylcarbamoyltransferase from Pseudomonas syringae pv. syringae (strain B728a).